The following is a 317-amino-acid chain: Beta-ketoacyl-[acyl-carrier-protein] synthase III (317 aa).

Residues cysteine 112 and histidine 244 contribute to the active site. Residues 245-249 (QANLR) form an ACP-binding region. Residue asparagine 274 is part of the active site.

It belongs to the thiolase-like superfamily. FabH family. In terms of assembly, homodimer.

The protein localises to the cytoplasm. It carries out the reaction malonyl-[ACP] + acetyl-CoA + H(+) = 3-oxobutanoyl-[ACP] + CO2 + CoA. It participates in lipid metabolism; fatty acid biosynthesis. Catalyzes the condensation reaction of fatty acid synthesis by the addition to an acyl acceptor of two carbons from malonyl-ACP. Catalyzes the first condensation reaction which initiates fatty acid synthesis and may therefore play a role in governing the total rate of fatty acid production. Possesses both acetoacetyl-ACP synthase and acetyl transacylase activities. Its substrate specificity determines the biosynthesis of branched-chain and/or straight-chain of fatty acids. The chain is Beta-ketoacyl-[acyl-carrier-protein] synthase III from Citrobacter koseri (strain ATCC BAA-895 / CDC 4225-83 / SGSC4696).